The chain runs to 73 residues: UPF0346 protein SH1485 (73 aa).

This sequence belongs to the UPF0346 family.

This Staphylococcus haemolyticus (strain JCSC1435) protein is UPF0346 protein SH1485.